Reading from the N-terminus, the 817-residue chain is Trehalose-phosphatase (817 aa).

Residues 1-547 (MSVYGKIPST…LAATKTDQRI (547 aa)) are glycosyltransferase.

In the N-terminal section; belongs to the glycosyltransferase 20 family. This sequence in the C-terminal section; belongs to the trehalose phosphatase family. In terms of assembly, component of the trehalose synthase complex that contains at least tps1, ntp1, and tpp1. Interacts with tps1. Interacts with ntp1. The cofactor is Mg(2+).

It catalyses the reaction alpha,alpha-trehalose 6-phosphate + H2O = alpha,alpha-trehalose + phosphate. It functions in the pathway carbohydrate biosynthesis. In terms of biological role, phosphatase catalytic subunit of the trehalose synthase complex that catalyzes the production of trehalose from glucose-6-phosphate and UDP-alpha-D-glucose in a two step process. The disaccharide trehalose serves as a storage carbohydrate that is mobilized during nutrient stress and spore germination. Together with ntp1, regulates the level of trehalose as a protectant for cell integrity during thermal, osmotic, and oxidative stress. The polypeptide is Trehalose-phosphatase (Schizosaccharomyces pombe (strain 972 / ATCC 24843) (Fission yeast)).